The following is a 409-amino-acid chain: UPF0261 protein Spro_4740 (409 aa).

Belongs to the UPF0261 family.

The chain is UPF0261 protein Spro_4740 from Serratia proteamaculans (strain 568).